Consider the following 902-residue polypeptide: Respiratory burst oxidase homolog protein A (902 aa).

Over 1–344 the chain is Cytoplasmic; the sequence is MMNRSEMQKL…KYFLFDNWKR (344 aa). Disordered regions lie at residues 63–87 and 107–130; these read KSPN…RSGR and ASSV…RRSK. A compositionally biased stretch (polar residues) spans 74-87; that stretch reads YEDQSLLRQGRSGR. The segment covering 107–116 has biased composition (low complexity); it reads ASSVSSSSAR. EF-hand-like regions lie at residues 163–173 and 198–209; these read TMTTNGLLHRS and ENVSGDSININE. EF-hand domains are found at residues 221 to 256 and 265 to 300; these read DFDS…SASA and QADE…APMQ. 5 residues coordinate Ca(2+): aspartate 234, aspartate 236, aspartate 238, arginine 240, and glutamate 245. Phosphoserine occurs at positions 311 and 315. Residues 345–365 traverse the membrane as a helical segment; it reads VWVMALWIGAMAGLFTWKFME. The Extracellular portion of the chain corresponds to 366–380; that stretch reads YRKRSAYEVMGVCVC. Residues 381–401 traverse the membrane as a helical segment; sequence IAKGAAETLKLNMAMILLPVC. One can recognise a Ferric oxidoreductase domain in the interval 383 to 540; it reads KGAAETLKLN…LFVIVYSLLV (158 aa). At 402–428 the chain is on the cytoplasmic side; the sequence is RNTITWLRTKTKLSAIVPFDDSLNFHK. A helical transmembrane segment spans residues 429–449; sequence VIAIGISVGVGIHATSHLACD. The Extracellular segment spans residues 450–484; sequence FPRLIAADEDQYEPMEKYFGPQTKRYLDFVQSVEG. Residues 485–505 form a helical membrane-spanning segment; it reads VTGIGMVVLMTIAFTLATTWF. Over 506–529 the chain is Cytoplasmic; it reads RRNKLNLPGPLKKITGFNAFWYSH. A helical transmembrane segment spans residues 530-550; it reads HLFVIVYSLLVVHGFYVYLII. Topologically, residues 551–709 are extracellular; that stretch reads EPWYKKTTWM…PAQDYKKFEV (159 aa). Residues 575-703 enclose the FAD-binding FR-type domain; the sequence is IRAFRSSVEA…DGPYGAPAQD (129 aa). The helical transmembrane segment at 710-730 threads the bilayer; sequence VLLVGLGIGATPMISIVSDII. The Cytoplasmic segment spans residues 731–902; that stretch reads NNLKGVEEGS…TKFIFHKENF (172 aa). Residues 738-760 are disordered; it reads EGSNRRQSPIHNMVTPPVSPSRK.

It belongs to the RBOH (TC 5.B.1.3) family. As to quaternary structure, monomer and homodimer.

The protein resides in the membrane. Its function is as follows. Calcium-dependent NADPH oxidase that generates superoxide. This is Respiratory burst oxidase homolog protein A (RBOHA) from Arabidopsis thaliana (Mouse-ear cress).